An 84-amino-acid chain; its full sequence is Toxin To10 (84 aa).

The N-terminal stretch at 1–19 (MNYSTLIAVASLLTAGTES) is a signal peptide. In terms of domain architecture, LCN-type CS-alpha/beta spans 21-80 (KDGYPVEGSCAFPCGYDNAYCDKLCKERKADSGYCYWVNILCYCYGLPDNAAIKGYGRCK). 4 disulfide bridges follow: cysteine 30–cysteine 79, cysteine 34–cysteine 55, cysteine 41–cysteine 62, and cysteine 45–cysteine 64. Proline 81 is subject to Proline amide.

Belongs to the long (4 C-C) scorpion toxin superfamily. Sodium channel inhibitor family. Alpha subfamily. As to expression, expressed by the venom gland.

It is found in the secreted. In terms of biological role, alpha toxins bind voltage-independently at site-3 of sodium channels (Nav) and inhibit the inactivation of the activated channels, thereby blocking neuronal transmission. This Tityus obscurus (Amazonian scorpion) protein is Toxin To10.